The sequence spans 558 residues: D-xylose-proton symporter-like 3, chloroplastic (558 aa).

The N-terminal 31 residues, 1–31 (MAFAVSVQSHFAIRALKRDHFKNPSPRTFCS), are a transit peptide targeting the chloroplast. 12 helical membrane passes run 98 to 118 (VILP…DIGA), 146 to 166 (LVVS…YGVA), 175 to 195 (LIIA…APDL), 197 to 217 (ILLV…HGAP), 238 to 258 (LFIV…IDVV), 264 to 284 (MYGF…SLPA), 359 to 379 (ALTI…PSVL), 400 to 420 (VSVI…AKVD), 426 to 446 (PLLI…SAYY), 449 to 469 (LGGF…CYQI), 491 to 511 (GISL…FAFS), and 522 to 542 (LFLL…LVVP).

Belongs to the major facilitator superfamily. Sugar transporter (TC 2.A.1.1) family.

The protein localises to the plastid. The protein resides in the chloroplast membrane. This is D-xylose-proton symporter-like 3, chloroplastic from Arabidopsis thaliana (Mouse-ear cress).